We begin with the raw amino-acid sequence, 279 residues long: Digeranylgeranylglyceryl phosphate synthase (279 aa).

The next 6 membrane-spanning stretches (helical) occupy residues 27 to 47, 90 to 110, 127 to 147, 199 to 219, 222 to 242, and 259 to 279; these read LIAT…VALI, FVGG…IAII, VLGN…GGAF, TGIF…LPFG, WGLF…FGAF, and TSIL…AAVI.

It belongs to the UbiA prenyltransferase family. DGGGP synthase subfamily. It depends on Mg(2+) as a cofactor.

It is found in the cell membrane. It carries out the reaction sn-3-O-(geranylgeranyl)glycerol 1-phosphate + (2E,6E,10E)-geranylgeranyl diphosphate = 2,3-bis-O-(geranylgeranyl)-sn-glycerol 1-phosphate + diphosphate. The protein operates within membrane lipid metabolism; glycerophospholipid metabolism. Its function is as follows. Prenyltransferase that catalyzes the transfer of the geranylgeranyl moiety of geranylgeranyl diphosphate (GGPP) to the C2 hydroxyl of (S)-3-O-geranylgeranylglyceryl phosphate (GGGP). This reaction is the second ether-bond-formation step in the biosynthesis of archaeal membrane lipids. The sequence is that of Digeranylgeranylglyceryl phosphate synthase from Methanoculleus marisnigri (strain ATCC 35101 / DSM 1498 / JR1).